The primary structure comprises 349 residues: Early nodulin-like protein 2 (349 aa).

Residues 1-28 form the signal peptide; the sequence is MTFLKMKSLSFFFTILLSLSTLFTISNA. The Phytocyanin domain maps to 29–130; the sequence is RKFNVGGSGA…GQKLNVVVIS (102 aa). An intrachain disulfide couples Cys84 to Cys118. Residues 136–330 are disordered; sequence TAQSPHAAAP…GQKKSSANGM (195 aa). 2 stretches are compositionally biased toward low complexity: residues 145–201 and 224–234; these read PGSS…SPPG and TSPVSPSSAPM. The span at 249-260 shows a compositional bias: polar residues; sequence IPPSSAPMTSPP. The segment covering 263 to 312 has biased composition (low complexity); sequence MAPKSSSPVSNSPTVSPSLAPGGSTSSSPSDSPSGSAMGPSGDGPSAAGD. Ser325 carries GPI-anchor amidated serine lipidation. Residues 326–349 constitute a propeptide, removed in mature form; it reads SANGMTVMSITTVLSLVLTIFLSA.

It belongs to the early nodulin-like (ENODL) family. As to expression, mostly expressed in leaves and roots, and, to a lower extent, in seedlings, stems and flowers, but barely in seeds.

It is found in the cell membrane. In terms of biological role, may act as a carbohydrate transporter. The protein is Early nodulin-like protein 2 of Arabidopsis thaliana (Mouse-ear cress).